Consider the following 856-residue polypeptide: 3-hydroxy-3-methylglutaryl-coenzyme A reductase (856 aa).

4 helical membrane passes run 12–32 (FCAS…VCML), 89–109 (ILGI…SSVI), 123–143 (LFFF…QFAL), and 190–210 (VLCC…MTFY). An N-linked (GlcNAc...) asparagine glycan is attached at Asn-326. A helical transmembrane segment spans residues 344–364 (SADHIVILILLLALAVKFVFF). The segment at 365–443 (ETRDELTTTR…CEVMALVTSG (79 aa)) is linker. The N-linked (GlcNAc...) asparagine glycan is linked to Asn-412. The segment at 443–771 (GHIAGYQLEK…SCTMPSIEIG (329 aa)) is catalytic. Catalysis depends on charge relay system residues Glu-528 and Lys-659. The N-linked (GlcNAc...) asparagine glycan is linked to Asn-700. Asp-735 functions as the Charge relay system in the catalytic mechanism. The Proton donor role is filled by His-834. The interval 836–856 (RHNRSSVSTSGSEPSTPACKS) is disordered. The N-linked (GlcNAc...) asparagine glycan is linked to Asn-838. Over residues 840–856 (SSVSTSGSEPSTPACKS) the composition is skewed to low complexity.

The protein belongs to the HMG-CoA reductase family.

It is found in the endoplasmic reticulum membrane. The catalysed reaction is (R)-mevalonate + 2 NADP(+) + CoA = (3S)-3-hydroxy-3-methylglutaryl-CoA + 2 NADPH + 2 H(+). It participates in metabolic intermediate biosynthesis; (R)-mevalonate biosynthesis; (R)-mevalonate from acetyl-CoA: step 3/3. With respect to regulation, the activity of HMG-CoA-reductase is suppressed by exogenous mevalonate. Synthesis of mevalonate for the production of non-sterol isoprenoids, which are essential for growth differentiation. The protein is 3-hydroxy-3-methylglutaryl-coenzyme A reductase of Blattella germanica (German cockroach).